The sequence spans 208 residues: uncharacterized protein (208 aa).

This is an uncharacterized protein from Schizosaccharomyces pombe (strain 972 / ATCC 24843) (Fission yeast).